Here is a 336-residue protein sequence, read N- to C-terminus: Spore photoproduct lyase (336 aa).

The region spanning 74 to 305 is the Radical SAM core domain; sequence CKPSANYQLP…KFGQFGYGKY (232 aa). [4Fe-4S] cluster contacts are provided by Cys-88, Cys-92, and Cys-95. The H-T-H motif DNA-binding region spans 215–232; that stretch reads ESAYNILNSGYKTGFIVG.

This sequence belongs to the radical SAM superfamily. SPL family. Monomer or homodimer. [4Fe-4S] cluster is required as a cofactor. The cofactor is S-adenosyl-L-methionine.

It carries out the reaction (5R)-5,6-dihydro-5-(thymidin-7-yl)thymidine in DNA = a thymidine dimer in DNA. Its function is as follows. Involved in repair of UV radiation-induced DNA damage during spore germination. Can repair thymine dimer 5-thyminyl-5,6-dihydrothymine (known as spore photoproduct (SP)) by in situ monomerization of SP to two thymines. The chain is Spore photoproduct lyase (splB) from Clostridium acetobutylicum (strain ATCC 824 / DSM 792 / JCM 1419 / IAM 19013 / LMG 5710 / NBRC 13948 / NRRL B-527 / VKM B-1787 / 2291 / W).